A 702-amino-acid polypeptide reads, in one-letter code: MKLILSTLIVFIHTLLVSALPTKEGSDPNSAKKYLVSDLPGLHENITPDNSIPLMFAGQLEIYPETDTHYFFWKFSDSNPETVTNRTIFWLNGGPGCSSMDGALLETGPFRINSQQQVISNNGSWHRMGDIIYVDQPAGTGFSYSDTYITDLDQVAEYFLKFMEKYYELFPEEIGYEIYFAGESYAGQYIPYIADAILQRNKKLVDGEHKYDLRGVLIGNGWVSPNEQSLSYLPFFKDHGLIDVHHPKWATLLAKHEQCQKIVNKIDSTFDDGVVHYYEVSSSTCEAILTDLLEYTQDTASEKDQRCVNMYDYTLRDSYPSCGMNWPYELVNVGPFLRQEKVMHQLNLINLKKWNECNGRVGRTFQARHSIPAVHLLPELAKEIPVMLFNGANDIICNSQGVLSYLQKLQWNGETGFTNKDNQISWIYDNKEVGYIIWERNISFINIYNSSHMVPYDLPDVSRALIDLITGKYDEKDVDGKKSFVTYPLGSRKESDASANGEENAGSDKVPGDSPSQTMDPMISSSTASSSSVESSLSSSTASADSDSTSSKFTRLIQLAVILVIFWGVYVLYASYKSRPSSIIKKPTNNTSNVTRSSAGKKKNVQWADQLNQFEDDERTQEPNQGIIAKAIGKITGSKDTRGRYAPVQRGNGNEYIDDIELGEGLSDPNVDEFIIGSDDDEEQGQAHSGAATHNQKQKPMN.

Residues 1–19 (MKLILSTLIVFIHTLLVSA) form the signal peptide. Topologically, residues 20–555 (LPTKEGSDPN…SDSTSSKFTR (536 aa)) are lumenal. N-linked (GlcNAc...) asparagine glycosylation is found at N85 and N122. Residues S184 and D394 contribute to the active site. Residues N441 and N449 are each glycosylated (N-linked (GlcNAc...) asparagine). Residue H452 is part of the active site. The segment at 491–531 (SRKESDASANGEENAGSDKVPGDSPSQTMDPMISSSTASSS) is disordered. The helical transmembrane segment at 556 to 576 (LIQLAVILVIFWGVYVLYASY) threads the bilayer. Over 577 to 702 (KSRPSSIIKK…THNQKQKPMN (126 aa)) the chain is Cytoplasmic. Disordered regions lie at residues 582 to 603 (SIIK…GKKK) and 659 to 702 (DIEL…KPMN). 2 stretches are compositionally biased toward polar residues: residues 587–598 (PTNNTSNVTRSS) and 692–702 (ATHNQKQKPMN).

It belongs to the peptidase S10 family.

It localises to the golgi apparatus. The protein resides in the trans-Golgi network membrane. The catalysed reaction is Preferential release of a C-terminal arginine or lysine residue.. Functionally, protease with a carboxypeptidase B-like function involved in the C-terminal processing of the lysine and arginine residues from protein precursors. Promotes cell fusion and is involved in the programmed cell death. This Candida albicans (strain WO-1) (Yeast) protein is Pheromone-processing carboxypeptidase KEX1 (KEX1).